Consider the following 623-residue polypeptide: Xaa-Pro aminopeptidase 1 (623 aa).

A peptide is bound at residue Arg77. An N6-acetyllysine modification is found at Lys304. His395 is an a peptide binding site. Residues Asp415, Asp426, and His489 each contribute to the Mn(2+) site. A peptide contacts are provided by His489, His498, and Glu523. Residues Glu523 and Glu537 each coordinate Mn(2+).

Belongs to the peptidase M24B family. In terms of assembly, homodimer. The cofactor is Mn(2+).

Its subcellular location is the cytoplasm. The protein localises to the cytosol. It carries out the reaction Release of any N-terminal amino acid, including proline, that is linked to proline, even from a dipeptide or tripeptide.. Its function is as follows. Metalloaminopeptidase that catalyzes the removal of a penultimate prolyl residue from the N-termini of peptides, such as Arg-Pro-Pro. Contributes to the degradation of bradykinin. This Mus musculus (Mouse) protein is Xaa-Pro aminopeptidase 1.